The following is a 249-amino-acid chain: 2,3-bisphosphoglycerate-dependent phosphoglycerate mutase (249 aa).

Substrate-binding positions include 9–16 (RHGQSQWN), 22–23 (TG), R61, 88–91 (ERHY), K99, 115–116 (RR), and 184–185 (GN). Catalysis depends on H10, which acts as the Tele-phosphohistidine intermediate. Catalysis depends on E88, which acts as the Proton donor/acceptor.

It belongs to the phosphoglycerate mutase family. BPG-dependent PGAM subfamily. Homodimer.

It catalyses the reaction (2R)-2-phosphoglycerate = (2R)-3-phosphoglycerate. It functions in the pathway carbohydrate degradation; glycolysis; pyruvate from D-glyceraldehyde 3-phosphate: step 3/5. Functionally, catalyzes the interconversion of 2-phosphoglycerate and 3-phosphoglycerate. The chain is 2,3-bisphosphoglycerate-dependent phosphoglycerate mutase from Xylella fastidiosa (strain M12).